Here is a 324-residue protein sequence, read N- to C-terminus: Beta-ketoacyl-[acyl-carrier-protein] synthase III (324 aa).

Catalysis depends on residues cysteine 112 and histidine 249. Residues 250–254 are ACP-binding; the sequence is QANRR. Asparagine 279 is a catalytic residue.

Belongs to the thiolase-like superfamily. FabH family. Homodimer.

It localises to the cytoplasm. It catalyses the reaction malonyl-[ACP] + acetyl-CoA + H(+) = 3-oxobutanoyl-[ACP] + CO2 + CoA. Its pathway is lipid metabolism; fatty acid biosynthesis. Functionally, catalyzes the condensation reaction of fatty acid synthesis by the addition to an acyl acceptor of two carbons from malonyl-ACP. Catalyzes the first condensation reaction which initiates fatty acid synthesis and may therefore play a role in governing the total rate of fatty acid production. Possesses both acetoacetyl-ACP synthase and acetyl transacylase activities. Its substrate specificity determines the biosynthesis of branched-chain and/or straight-chain of fatty acids. The sequence is that of Beta-ketoacyl-[acyl-carrier-protein] synthase III from Streptococcus equi subsp. equi (strain 4047).